The chain runs to 479 residues: Oxysterol-binding protein homolog C23B6.01c (479 aa).

Phosphoserine is present on residues Ser-328, Ser-408, Ser-409, and Ser-421. The segment covering 404–418 (KPEDSSIHKHSRDAS) has biased composition (basic and acidic residues). The segment at 404 to 479 (KPEDSSIHKH…KLHEEQDPAL (76 aa)) is disordered. Positions 439–452 (QSTASFVTYRSDNG) are enriched in polar residues. Over residues 470 to 479 (KLHEEQDPAL) the composition is skewed to basic and acidic residues.

It belongs to the OSBP family.

The protein localises to the cytoplasm. Its subcellular location is the nucleus. The protein is Oxysterol-binding protein homolog C23B6.01c of Schizosaccharomyces pombe (strain 972 / ATCC 24843) (Fission yeast).